The sequence spans 204 residues: MECKLVNLSNNDVGTTQLNPLIFSVEQKLSILHDIVRWQLAKRRAGTHKVKGISDVSGTTAKPYSQKRTGRARQGSLRSPQFRGGGVIFGPIVRSHAYSLNKKVRKFGLKVALSLKYLNNQVIILNNLNINVKKTSEMCKYIQNFKFSSFLIVGDYEDSLLRAARNLHYVNLIKPIGLNVFDILNHECIMLTSDALRYLEGRLL.

The tract at residues 53 to 77 is disordered; it reads ISDVSGTTAKPYSQKRTGRARQGSL. The segment covering 56–67 has biased composition (polar residues); it reads VSGTTAKPYSQK.

This sequence belongs to the universal ribosomal protein uL4 family. As to quaternary structure, part of the 50S ribosomal subunit.

One of the primary rRNA binding proteins, this protein initially binds near the 5'-end of the 23S rRNA. It is important during the early stages of 50S assembly. It makes multiple contacts with different domains of the 23S rRNA in the assembled 50S subunit and ribosome. Functionally, forms part of the polypeptide exit tunnel. The sequence is that of Large ribosomal subunit protein uL4 from Wolbachia sp. subsp. Brugia malayi (strain TRS).